The primary structure comprises 162 residues: Caveolin-2 (162 aa).

At 1-86 the chain is on the cytoplasmic side; the sequence is MGLETEKADA…FEVSKYLIYK (86 aa). Tyr-19 carries the phosphotyrosine; by SRC modification. The segment at 19–40 is disordered; the sequence is YSRHSGLGYPEPEKCAKSTQDR. Residues Ser-20 and Ser-23 each carry the phosphoserine modification. Tyr-27 bears the Phosphotyrosine; by SRC mark. The segment covering 29-40 has biased composition (basic and acidic residues); it reads EPEKCAKSTQDR. Ser-36 carries the post-translational modification Phosphoserine. An intramembrane region (helical) is located at residues 87–107; it reads VLTVLLAIPLAFVAGILFATL. At 108–162 the chain is on the cytoplasmic side; it reads SCLHIWIVVPFVKTCLMVLPSVQTVWHSITDGFIAPLYKSMGLIFSSISLRLSPE.

It belongs to the caveolin family. Monomer or homodimer. Interacts with CAV1; the interaction forms a stable heterooligomeric complex that is required for targeting to lipid rafts and for caveolae formation. Tyrosine phosphorylated forms do not form heterooligomers with the Tyr-19-phosphorylated form existing as a monomer or dimer, and the Tyr-27-form as a monomer only. Interacts (tyrosine phosphorylated form) with the SH2 domain-containing proteins, RASA1, NCK1 and SRC. Interacts (tyrosine phosphorylated form) with INSR, the interaction (Tyr-27-phosphorylated form) is increased on insulin stimulation. Interacts (Tyr-19 phosphorylated form) with MAPK1 (phosphorylated form); the interaction, promoted by insulin, leads to nuclear location and MAPK1 activation. Interacts with STAT3; the interaction is increased on insulin-induced tyrosine phosphorylation leading to STAT activation. Post-translationally, phosphorylated on serine and tyrosine residues. CAV1 promotes phosphorylation on Ser-23 which then targets the complex to the plasma membrane, lipid rafts and caveolae. Phosphorylation on Ser-36 appears to modulate mitosis in endothelial cells. Phosphorylation on both Tyr-19 and Tyr-27 is required for insulin-induced 'Ser-727' phosphorylation of STAT3 and its activation. Phosphorylation on Tyr-19 is required for insulin-induced phosphorylation of MAPK1 and DNA binding of STAT3. Tyrosine phosphorylation is induced by both EGF and insulin (By. similarity).

Its subcellular location is the nucleus. The protein localises to the cytoplasm. It localises to the golgi apparatus membrane. It is found in the cell membrane. The protein resides in the membrane. Its subcellular location is the caveola. Its function is as follows. May act as a scaffolding protein within caveolar membranes. Interacts directly with G-protein alpha subunits and can functionally regulate their activity. Acts as an accessory protein in conjunction with CAV1 in targeting to lipid rafts and driving caveolae formation. The Ser-36 phosphorylated form has a role in modulating mitosis in endothelial cells. Positive regulator of cellular mitogenesis of the MAPK signaling pathway. Required for the insulin-stimulated nuclear translocation and activation of MAPK1 and STAT3, and the subsequent regulation of cell cycle progression. The sequence is that of Caveolin-2 (CAV2) from Didelphis virginiana (North American opossum).